The chain runs to 580 residues: MVRFKELAELFEELERITSHKEIVRKLAGFFGGLKGDEVKDSAYLFLGSIGPAFENTTLGIKDRLVTRAIAGAYGVSEEEVKKRYARAGDLGDVAFELSKKREASLTIEEVFKRLRQIKEASGKGSQEKKTGLLSDILQKATPEEGKYIIRIVLGRLRLGFGDQFLLEAFSIAFTGDKKHAGKIKESYSVCTDIGELAQTLAEHGAGAPGYFSIKPGRPVKSMLAQRVESFEELEERIKGKKAAEEKYDGERVQIHKAGDEIKAFSRRLEDITAQYPDIIEAVRESISADTIVLDGEIVAYAELEKENTRIEEFYPFQNLMQRRRKYEVEKYREKCPVAVFFFDILYLNGESLLKKTYPERRALLEEHVNGSGIVHLTRRTVTENIEELEDFFNETVEKGLEGIVAKSMSSNSVYEAGKRSWLWLKWKQEYSEGMRETFDLVVVGSYYGKGKRKGSFGALLCAVLNEEEQQFETFTKVGTGFTEADAEEINSLLSAHTVSEAPKNVIIKKGMLPDIFIEPAVVIEVLGSEITNSPGHTAGEGEEETGLALRFPRFLRIRYDRAPFDATTVREIRDLKEGI.

Glu245 contributes to the ATP binding site. Lys247 (N6-AMP-lysine intermediate) is an active-site residue. ATP contacts are provided by Arg252, Arg267, Glu297, Phe343, Arg420, and Lys426.

This sequence belongs to the ATP-dependent DNA ligase family. Mg(2+) is required as a cofactor.

The enzyme catalyses ATP + (deoxyribonucleotide)n-3'-hydroxyl + 5'-phospho-(deoxyribonucleotide)m = (deoxyribonucleotide)n+m + AMP + diphosphate.. In terms of biological role, DNA ligase that seals nicks in double-stranded DNA during DNA replication, DNA recombination and DNA repair. The sequence is that of DNA ligase 1 from Methanosarcina acetivorans (strain ATCC 35395 / DSM 2834 / JCM 12185 / C2A).